The following is a 489-amino-acid chain: Glutamyl-tRNA(Gln) amidotransferase subunit A (489 aa).

Catalysis depends on charge relay system residues Lys-77 and Ser-152. The active-site Acyl-ester intermediate is the Ser-176.

This sequence belongs to the amidase family. GatA subfamily. In terms of assembly, heterotrimer of A, B and C subunits.

It catalyses the reaction L-glutamyl-tRNA(Gln) + L-glutamine + ATP + H2O = L-glutaminyl-tRNA(Gln) + L-glutamate + ADP + phosphate + H(+). Functionally, allows the formation of correctly charged Gln-tRNA(Gln) through the transamidation of misacylated Glu-tRNA(Gln) in organisms which lack glutaminyl-tRNA synthetase. The reaction takes place in the presence of glutamine and ATP through an activated gamma-phospho-Glu-tRNA(Gln). The sequence is that of Glutamyl-tRNA(Gln) amidotransferase subunit A from Levilactobacillus brevis (strain ATCC 367 / BCRC 12310 / CIP 105137 / JCM 1170 / LMG 11437 / NCIMB 947 / NCTC 947) (Lactobacillus brevis).